The chain runs to 345 residues: Methylthioribose-1-phosphate isomerase (345 aa).

Substrate is bound by residues Arg-47 to Ala-49, Arg-90, and Gln-199. The active-site Proton donor is the Asp-240. Substrate is bound at residue Asn-250 to Lys-251.

Belongs to the eIF-2B alpha/beta/delta subunits family. MtnA subfamily.

It catalyses the reaction 5-(methylsulfanyl)-alpha-D-ribose 1-phosphate = 5-(methylsulfanyl)-D-ribulose 1-phosphate. The protein operates within amino-acid biosynthesis; L-methionine biosynthesis via salvage pathway; L-methionine from S-methyl-5-thio-alpha-D-ribose 1-phosphate: step 1/6. In terms of biological role, catalyzes the interconversion of methylthioribose-1-phosphate (MTR-1-P) into methylthioribulose-1-phosphate (MTRu-1-P). The polypeptide is Methylthioribose-1-phosphate isomerase (Crocosphaera subtropica (strain ATCC 51142 / BH68) (Cyanothece sp. (strain ATCC 51142))).